Here is a 237-residue protein sequence, read N- to C-terminus: Insulin-like growth factor-binding protein 4 (237 aa).

One can recognise an IGFBP N-terminal domain in the interval 2–82 (EAIHCPPCSE…VHGQGVCMEL (81 aa)). 6 disulfides stabilise this stretch: cysteine 6–cysteine 32, cysteine 9–cysteine 34, cysteine 17–cysteine 35, cysteine 23–cysteine 38, cysteine 46–cysteine 59, and cysteine 53–cysteine 79. N-linked (GlcNAc...) asparagine glycosylation occurs at asparagine 104. Disulfide bonds link cysteine 110/cysteine 117, cysteine 153/cysteine 183, cysteine 194/cysteine 205, and cysteine 207/cysteine 228. Residues 150 to 228 (QGSCQSELHR…GLEPKGELDC (79 aa)) enclose the Thyroglobulin type-1 domain. Serine 234 carries the phosphoserine modification.

As to quaternary structure, binds IGF2 more than IGF1. There are two different molecular mass variants (29 kDa and 24 kDa forms). The 29 kDa form was shown to be N-glycosylated. Detected in adult ewe, liver &gt; kidney &gt; lung &gt;&gt; heart and also in several fetal tissues.

The protein localises to the secreted. In terms of biological role, IGF-binding proteins prolong the half-life of the IGFs and have been shown to either inhibit or stimulate the growth promoting effects of the IGFs on cell culture. They alter the interaction of IGFs with their cell surface receptors. This chain is Insulin-like growth factor-binding protein 4 (IGFBP4), found in Ovis aries (Sheep).